Reading from the N-terminus, the 214-residue chain is Elongation factor Ts (214 aa).

Positions 80–83 are involved in Mg(2+) ion dislocation from EF-Tu; sequence TDFV.

This sequence belongs to the EF-Ts family.

The protein resides in the cytoplasm. Associates with the EF-Tu.GDP complex and induces the exchange of GDP to GTP. It remains bound to the aminoacyl-tRNA.EF-Tu.GTP complex up to the GTP hydrolysis stage on the ribosome. The chain is Elongation factor Ts from Syntrophomonas wolfei subsp. wolfei (strain DSM 2245B / Goettingen).